The primary structure comprises 408 residues: Multidrug resistance protein MdtG (408 aa).

11 helical membrane-spanning segments follow: residues 16–36 (LIVA…VMPF), 58–78 (IVFS…GGLA), 92–112 (LGMG…QFLI), 115–135 (ALLG…ATQV), 146–166 (TLST…GLLA), 173–193 (PVFF…LFCI), 224–244 (LFVT…ILTL), 256–276 (VAFI…LSAP), 290–310 (ILIT…YVQT), 319–339 (FLLG…LVYN), and 378–398 (AVFL…WNSL).

It belongs to the major facilitator superfamily. DHA1 family. MdtG (TC 2.A.1.2.20) subfamily.

It localises to the cell inner membrane. In terms of biological role, confers resistance to fosfomycin and deoxycholate. In Escherichia coli O81 (strain ED1a), this protein is Multidrug resistance protein MdtG.